A 219-amino-acid polypeptide reads, in one-letter code: 7-cyano-7-deazaguanine synthase (219 aa).

ATP is bound at residue 10–20 (FSGGQDSTTCL). Zn(2+) is bound by residues cysteine 188, cysteine 196, cysteine 199, and cysteine 202.

Belongs to the QueC family. Zn(2+) is required as a cofactor.

The enzyme catalyses 7-carboxy-7-deazaguanine + NH4(+) + ATP = 7-cyano-7-deazaguanine + ADP + phosphate + H2O + H(+). It participates in purine metabolism; 7-cyano-7-deazaguanine biosynthesis. In terms of biological role, catalyzes the ATP-dependent conversion of 7-carboxy-7-deazaguanine (CDG) to 7-cyano-7-deazaguanine (preQ(0)). The chain is 7-cyano-7-deazaguanine synthase from Neisseria meningitidis serogroup C / serotype 2a (strain ATCC 700532 / DSM 15464 / FAM18).